The sequence spans 261 residues: Glandular kallikrein-7, submandibular/renal (261 aa).

The first 18 residues, 1–18, serve as a signal peptide directing secretion; that stretch reads MWFLILFLDLSLGQIDAA. Positions 19–24 are cleaved as a propeptide — activation peptide; it reads PPGQSR. One can recognise a Peptidase S1 domain in the interval 25 to 258; it reads VIGGYKCEKN…FTSWIKEVMK (234 aa). Cystine bridges form between C31-C173, C50-C66, C152-C219, C184-C198, and C209-C234. H65 functions as the Charge relay system in the catalytic mechanism. N-linked (GlcNAc...) asparagine glycosylation is present at N108. Catalysis depends on D120, which acts as the Charge relay system. S213 functions as the Charge relay system in the catalytic mechanism.

Belongs to the peptidase S1 family. Kallikrein subfamily. In terms of tissue distribution, kidney and submandibular gland. Not expressed in liver, pancreas, spleen, parotid, testis, cortex, prostate, ovary and pituitary.

The enzyme catalyses Preferential cleavage of Arg-|-Xaa bonds in small molecule substrates. Highly selective action to release kallidin (lysyl-bradykinin) from kininogen involves hydrolysis of Met-|-Xaa or Leu-|-Xaa.. Functionally, glandular kallikreins cleave Met-Lys and Arg-Ser bonds in kininogen to release Lys-bradykinin. Predominant kallikrein protein in the kidney. This Rattus norvegicus (Rat) protein is Glandular kallikrein-7, submandibular/renal (Klk7).